The sequence spans 730 residues: Meiotically up-regulated gene 70 protein (730 aa).

The segment at methionine 1 to glutamine 27 is disordered. Residues serine 7–valine 20 show a composition bias toward low complexity. 4 CBS domains span residues alanine 69–arginine 127, methionine 135–arginine 200, serine 263–proline 319, and methionine 328–glutamate 385. The next 2 helical transmembrane spans lie at alanine 290 to leucine 310 and valine 358 to isoleucine 378. The disordered stretch occupies residues glutamate 420–serine 517. 2 stretches are compositionally biased toward polar residues: residues alanine 458–proline 470 and tyrosine 480–alanine 515. The region spanning proline 572–glutamate 649 is the PB1 domain. The chain crosses the membrane as a helical span at residues proline 706–leucine 726.

The protein localises to the cytoplasm. Its subcellular location is the nucleus membrane. Functionally, has a role in meiosis. The sequence is that of Meiotically up-regulated gene 70 protein (mug70) from Schizosaccharomyces pombe (strain 972 / ATCC 24843) (Fission yeast).